Reading from the N-terminus, the 419-residue chain is Acyl-[acyl-carrier-protein] desaturase 6, chloroplastic (419 aa).

Residues 1-54 constitute a chloroplast transit peptide; sequence MAATATMAMPLANRLRCKPNTNSSSPSRTLFGRRVTMISSSRWGSAVSGSAIMS. Residues E151, E189, H192, E242, E277, and H280 each contribute to the Fe cation site.

The protein belongs to the fatty acid desaturase type 2 family. As to quaternary structure, homodimer. The cofactor is Fe(2+).

The protein resides in the plastid. Its subcellular location is the chloroplast. The protein operates within lipid metabolism; fatty acid metabolism. Its function is as follows. Introduces a cis double bond in the acyl chain of an acyl-[acyl-carrier protein]. The sequence is that of Acyl-[acyl-carrier-protein] desaturase 6, chloroplastic from Oryza sativa subsp. japonica (Rice).